Consider the following 409-residue polypeptide: Snake venom metalloproteinase BITM02A (409 aa).

An N-terminal signal peptide occupies residues 1–20 (MIEVLLVTICLAAFPYQGSS). The propeptide occupies 21–189 (IILESGNVND…KKASQSNLTP (169 aa)). Positions 193–389 (RYIELFIVVD…ENPQCILNKR (197 aa)) constitute a Peptidase M12B domain. Positions 196 and 280 each coordinate Ca(2+). 3 cysteine pairs are disulfide-bonded: C304/C384, C344/C368, and C346/C351. A Zn(2+)-binding site is contributed by H329. Residue E330 is part of the active site. Zn(2+) contacts are provided by H333 and H339. Ca(2+) is bound by residues C384, N387, V399, N402, L404, E406, and E409. A propeptide spanning residues 390–409 (LRTDTVSTPVSGNELLEAGE) is cleaved from the precursor.

Belongs to the venom metalloproteinase (M12B) family. P-I subfamily. As to quaternary structure, monomer. It depends on Zn(2+) as a cofactor. As to expression, expressed by the venom gland.

The protein localises to the secreted. Snake venom metalloproteinase that impairs hemostasis in the envenomed animal. In Bothrops insularis (Golden lancehead), this protein is Snake venom metalloproteinase BITM02A.